A 718-amino-acid polypeptide reads, in one-letter code: Effector protein hopM1 (718 aa).

Over residues 1-10 (MIGTRVGGSG) the composition is skewed to gly residues. Disordered regions lie at residues 1 to 63 (MIGT…ARLP) and 683 to 718 (GVSS…GRRR). Residues 11 to 22 (STEIVQANQPQP) are compositionally biased toward polar residues. Positions 44–60 (ASQSAAQAPESSAAGAA) are enriched in low complexity.

As to quaternary structure, interacts with the chaperone ShcM.

It localises to the secreted. The protein localises to the host membrane. Its function is as follows. Involved in the suppression of basal resistance and promotion of disease symptoms in plants. May be involved in the inhibition of a host vesicle trafficking pathway. This is Effector protein hopM1 (hopM1) from Pseudomonas syringae pv. syringae (strain B728a).